Here is a 129-residue protein sequence, read N- to C-terminus: Large ribosomal subunit protein bL20 (129 aa).

Belongs to the bacterial ribosomal protein bL20 family.

Its function is as follows. Binds directly to 23S ribosomal RNA and is necessary for the in vitro assembly process of the 50S ribosomal subunit. It is not involved in the protein synthesizing functions of that subunit. This is Large ribosomal subunit protein bL20 from Rhodococcus jostii (strain RHA1).